The following is a 644-amino-acid chain: Exoribonuclease 2 (644 aa).

Residues 189 to 516 form the RNB domain; sequence RKDLTALDFV…NHRLLKAVIK (328 aa). Residues 561-643 enclose the S1 motif domain; sequence DTRFAAEIVD…ETRSIIARPV (83 aa).

The protein belongs to the RNR ribonuclease family. RNase II subfamily.

The protein localises to the cytoplasm. The catalysed reaction is Exonucleolytic cleavage in the 3'- to 5'-direction to yield nucleoside 5'-phosphates.. Functionally, involved in mRNA degradation. Hydrolyzes single-stranded polyribonucleotides processively in the 3' to 5' direction. This chain is Exoribonuclease 2, found in Escherichia coli O157:H7.